Consider the following 824-residue polypeptide: MEEKYVPARVEEKWQKLWDSNKSFKAEKVEGKSKYYLLEMFPYPSGRIHMGHVRNYSIGDVIARFKRMKGFNVLHPMGWDAFGMPAENAAIQHKSHPAKWTYENIDYMRGQLKKMGFSYDWDRELATCNVEYYKWEQLIFLQMLEKGLAYKKKSSVNWCPRCETVLANEQVEDGSCWRCDSLVEQKELEQWSFRITDYAEELLEDTYKLPGWPERVLTMQRNWIGRSTGCEIDFSIEGRKDAIKVFTTRQDTLFGATFMSLAPEHPLALQLTTAENMIVVNAFLDKVKKTDKIKRTAEDFEKEGVFTGSYCINPVTNRRMPIYLANFVLTDYGTGAVMAVPTHDQRDFEFARKYAIAMEVVIQPEGGSLDVATMTEAYTAEGIMVNSGRFDGLNSAVAKEQIADFLEQEGLGKKTVNFRLRDWGISRQRYWGNPIPVIYCDDCGAVPVPAKDLPVVLPMDATFTGEGGNPLSKIDSFIKTTCPLCGKDARRETDTMDTFVESSWYFLRYCCPDFACGPLDKGKTEYWMSVDQYIGGIEHAVMHLLYARFFTKVLRDLGYCDINEPFTNLLTQGMVIKDGSKMSKSKGNVVDPNALIEKYGADTARLFSLFAAPPEKDLDWSDQGVDGSYRFLNRVWKLVYECLPLISATGPLDAAALTDEGKTLRRLVHKTIRKVSDDIEDRFHFNTAIAAIMEMVNAIQAFEPKNQPRNVPVLKEAVESVVLLLAPFVPHFAEELWESLGHEDNLNEAAWPAFDAAAAVDEELLVVVQVNGKLRGKVTVAASATDEDIKGAVLADEKIRQLIDGMNIKKIVYVPGKLVNIVVG.

The 'HIGH' region signature appears at 42–52; the sequence is PYPSGRIHMGH. Positions 581-585 match the 'KMSKS' region motif; sequence KMSKS. Lysine 584 lines the ATP pocket.

It belongs to the class-I aminoacyl-tRNA synthetase family.

The protein resides in the cytoplasm. The enzyme catalyses tRNA(Leu) + L-leucine + ATP = L-leucyl-tRNA(Leu) + AMP + diphosphate. In Geotalea daltonii (strain DSM 22248 / JCM 15807 / FRC-32) (Geobacter daltonii), this protein is Leucine--tRNA ligase.